The chain runs to 87 residues: U14-lycotoxin-Ls1a (87 aa).

The N-terminal stretch at 1 to 20 (MNSKVFAALLLLALSTCVLS) is a signal peptide. One can recognise a WAP domain in the interval 21–66 (EKYCPTPRNTSCKKMNIRNNCCRDSDCTSNAFCCAEPCGNFCHKAS). 5 disulfides stabilise this stretch: C24/C54, C32/C58, C41/C53, C42/C80, and C47/C62.

It belongs to the venom protein 11 family. 01 (wap-1) subfamily. Post-translationally, contains 5 disulfide bonds. Expressed by the venom gland.

It localises to the secreted. In terms of biological role, has antibacterial activity. This Lycosa singoriensis (Wolf spider) protein is U14-lycotoxin-Ls1a.